We begin with the raw amino-acid sequence, 468 residues long: Argininosuccinate lyase (468 aa).

Belongs to the lyase 1 family. Argininosuccinate lyase subfamily.

The protein localises to the cytoplasm. It catalyses the reaction 2-(N(omega)-L-arginino)succinate = fumarate + L-arginine. The protein operates within amino-acid biosynthesis; L-arginine biosynthesis; L-arginine from L-ornithine and carbamoyl phosphate: step 3/3. This is Argininosuccinate lyase from Zymomonas mobilis subsp. mobilis (strain ATCC 31821 / ZM4 / CP4).